Reading from the N-terminus, the 171-residue chain is KRAB domain-containing protein 4 (171 aa).

A KRAB domain is found at 8–79 (LTFKDVFVDF…DGGTPVRTCA (72 aa)).

In terms of tissue distribution, expressed in brain, ovary, testis, prostate, tonsil, heart, bone marrow, colon, breast and kidney.

The protein is KRAB domain-containing protein 4 (KRBOX4) of Homo sapiens (Human).